The sequence spans 133 residues: ATP synthase epsilon chain (133 aa).

This sequence belongs to the ATPase epsilon chain family. As to quaternary structure, F-type ATPases have 2 components, CF(1) - the catalytic core - and CF(0) - the membrane proton channel. CF(1) has five subunits: alpha(3), beta(3), gamma(1), delta(1), epsilon(1). CF(0) has three main subunits: a, b and c.

The protein localises to the cell membrane. Produces ATP from ADP in the presence of a proton gradient across the membrane. The sequence is that of ATP synthase epsilon chain from Lawsonia intracellularis (strain PHE/MN1-00).